We begin with the raw amino-acid sequence, 87 residues long: Small ribosomal subunit protein bS20 (87 aa).

The interval 1 to 26 (MANIKSAKKRAVQSEKARKHNASRRS) is disordered.

This sequence belongs to the bacterial ribosomal protein bS20 family.

Functionally, binds directly to 16S ribosomal RNA. The protein is Small ribosomal subunit protein bS20 of Salmonella gallinarum (strain 287/91 / NCTC 13346).